A 528-amino-acid chain; its full sequence is Sphingosine-1-phosphate lyase (528 aa).

Residues 13-35 traverse the membrane as a helical segment; that stretch reads PAKLVLATAGITAASILAYQAIT. At Lys-324 the chain carries N6-(pyridoxal phosphate)lysine.

It belongs to the group II decarboxylase family. Sphingosine-1-phosphate lyase subfamily. Pyridoxal 5'-phosphate serves as cofactor.

Its subcellular location is the endoplasmic reticulum membrane. It catalyses the reaction sphinganine 1-phosphate = hexadecanal + phosphoethanolamine. It participates in lipid metabolism; sphingolipid metabolism. Its function is as follows. Cleaves phosphorylated sphingoid bases (PSBs), such as sphingosine-1-phosphate, into fatty aldehydes and phosphoethanolamine. Sphingosine-1-phosphate (S1P) probably acts intracellularly as a second messenger perhaps by promoting cell proliferation; the absence of S1P lyase increases its concentration. This leads to increased lateral pseudopod formation as well as defects in the efficiency of chemotaxis. Overexpression of S1P lyase causes decreased growth rates, entry into stationary phase at lower cell density and increased sensitivity to the antitumor agents cisplatin and carboplatin; these effects are more pronounced in cells that express more enzyme. This Dictyostelium discoideum (Social amoeba) protein is Sphingosine-1-phosphate lyase (sglA).